The sequence spans 270 residues: Glucan endo-1,3-beta-glucosidase (270 aa).

Residues 1–18 form the signal peptide; that stretch reads MNAFTFPLLLAFCAFAHG. One can recognise a GH16 domain in the interval 22-270; it reads LDWEDEFNGG…VEYVKKWTWN (249 aa). The active-site Nucleophile is the Glu137. Glu142 functions as the Proton donor in the catalytic mechanism.

This sequence belongs to the glycosyl hydrolase 16 family.

The protein localises to the secreted. The catalysed reaction is Hydrolysis of (1-&gt;3)-beta-D-glucosidic linkages in (1-&gt;3)-beta-D-glucans.. Ca(2+) does not affect the enzyme activity nor the thermostability. Other cations, such as Mg(2+), Mn(2+), Cu(2+), Zn(2+), Ag(+) or Hg(2+) do not cause any serious adverse effect on the activity. Also no significant change in the activity in response to the addition of 1 mM EDTA. Its function is as follows. Hydrolyzes laminarin majorily to glucose (G1), laminaribiose (L2), laminaritriose (L3), laminaritetraose (L4) and laminaripentaose (L5). Hydrolyzes laminarioligosaccharides L3, L4, L5 and laminarihexaose (L6) to G1, L2 and L3. Hardly hydrolyzes L2. Does not hydrolyze lichenan, pustulan, carboxymethyl cellulose, locust bean gum or soluble starch. The polypeptide is Glucan endo-1,3-beta-glucosidase (Cryptopygus antarcticus (Antarctic springtail)).